We begin with the raw amino-acid sequence, 162 residues long: Ribose-5-phosphate isomerase B (162 aa).

D-ribulose 5-phosphate is bound by residues Asp-11 to His-12 and Gly-70 to Gly-74. Catalysis depends on Glu-75, which acts as the Proton acceptor. His-102 (proton donor) is an active-site residue. Residues Asn-103, Arg-113, Arg-137, and Arg-141 each coordinate D-ribulose 5-phosphate.

The protein belongs to the LacAB/RpiB family. As to quaternary structure, homodimer.

It carries out the reaction aldehydo-D-ribose 5-phosphate = D-ribulose 5-phosphate. It functions in the pathway carbohydrate degradation; pentose phosphate pathway; D-ribose 5-phosphate from D-ribulose 5-phosphate (non-oxidative stage): step 1/1. In terms of biological role, catalyzes the interconversion of ribulose-5-P and ribose-5-P. In Mycobacterium bovis (strain ATCC BAA-935 / AF2122/97), this protein is Ribose-5-phosphate isomerase B.